Consider the following 88-residue polypeptide: Small ribosomal subunit protein uS17 (88 aa).

Belongs to the universal ribosomal protein uS17 family. In terms of assembly, part of the 30S ribosomal subunit.

Its function is as follows. One of the primary rRNA binding proteins, it binds specifically to the 5'-end of 16S ribosomal RNA. This is Small ribosomal subunit protein uS17 from Pseudomonas fluorescens (strain SBW25).